Here is a 448-residue protein sequence, read N- to C-terminus: B box and SPRY domain-containing protein (448 aa).

Over residues 1–18 (MSSDVSGTESGSESGPES) the composition is skewed to low complexity. The tract at residues 1–58 (MSSDVSGTESGSESGPESVPEPVPEPGPEPESEPGPGPAPGPGPGPAPGPGPGLGREP) is disordered. A compositionally biased stretch (pro residues) spans 19–51 (VPEPVPEPGPEPESEPGPGPAPGPGPGPAPGPG). The B box-type zinc-finger motif lies at 63–111 (QPCQLCPEHGKPLSWFCLSERRPVCATCAGFGGRCHRHRIRRAEEHAEE). The B30.2/SPRY domain maps to 257-448 (SPLLTQLWAT…VADQVISIVC (192 aa)).

Interacts with TRPV5 and TRPV6. Interacts with YWHAZ/14-3-3 protein zeta. In terms of tissue distribution, predominantly expressed in testis. Expressed in brain at low levels.

The protein localises to the cytoplasm. It localises to the membrane. In terms of biological role, may regulate epithelial calcium transport by inhibiting TRPV5 activity. The chain is B box and SPRY domain-containing protein (Bspry) from Rattus norvegicus (Rat).